Here is a 534-residue protein sequence, read N- to C-terminus: MLQVQAVHRDEKQAVKLKKTTYLPYLFNLVLPKMFYPNRIVVARLYTDVHEHDKQAAEYFEGFQTPCFEVPASLFPGEAPLDKIVFMPTVMLPMGFEAGGVFGPGVLPRRSYPIDLMASGHKGQTPPLFVGLRSLYVQLPSGIESFLDTVVDNAAGQDALVYGSCQPGNHPSKGEQSKELMHSNDCSLSIAYNLPAPPTPPSPYPFPPLPVQYNIYTPDLSNVHMLMLQQRNPTVALLSTVNHPHVPAVAFATMGDEECPKFELPSDIFPICEGVNRPIFLPRRFLPKGFDAGCVFKPASLPKLWFVKHIGGFNRPQPQHNNAITPPLFVGKISLVVGAHHLAKELQRQGEQKAQSEGAEGGSLKVVEPNGGFIPVTQGFMVMETEQQTPPRGAYSLESYQEASEKGCVVRAIKDEAIEATDTLLSKLASKPEDMQKKYLSCFKVDSDIDLMAEAMADMGTAEMSLLAKRETLPGVDGPRALDQLRQVVEDRSQIRSHTDQLIQDHIYRMDRNRMLALRQPFAPWFGCGTIERK.

Belongs to the DM7 family.

In Drosophila yakuba (Fruit fly), this protein is DM7 family protein GE17491.